The following is an 815-amino-acid chain: Leucine--tRNA ligase (815 aa).

The 'HIGH' region signature appears at Pro-42–His-52. A 'KMSKS' region motif is present at residues Lys-574 to Ser-578. Lys-577 serves as a coordination point for ATP.

It belongs to the class-I aminoacyl-tRNA synthetase family.

It localises to the cytoplasm. The enzyme catalyses tRNA(Leu) + L-leucine + ATP = L-leucyl-tRNA(Leu) + AMP + diphosphate. In Marinomonas sp. (strain MWYL1), this protein is Leucine--tRNA ligase.